The chain runs to 240 residues: UDP-2,3-diacylglucosamine hydrolase (240 aa).

Residues Asp8, His10, Asp41, Asn78, and His113 each coordinate Mn(2+). Position 78 to 79 (78 to 79 (NR)) interacts with substrate. Positions 121, 159, 163, 166, and 194 each coordinate substrate. 2 residues coordinate Mn(2+): His194 and His196.

Belongs to the LpxH family. It depends on Mn(2+) as a cofactor.

Its subcellular location is the cell inner membrane. The enzyme catalyses UDP-2-N,3-O-bis[(3R)-3-hydroxytetradecanoyl]-alpha-D-glucosamine + H2O = 2-N,3-O-bis[(3R)-3-hydroxytetradecanoyl]-alpha-D-glucosaminyl 1-phosphate + UMP + 2 H(+). It participates in glycolipid biosynthesis; lipid IV(A) biosynthesis; lipid IV(A) from (3R)-3-hydroxytetradecanoyl-[acyl-carrier-protein] and UDP-N-acetyl-alpha-D-glucosamine: step 4/6. In terms of biological role, hydrolyzes the pyrophosphate bond of UDP-2,3-diacylglucosamine to yield 2,3-diacylglucosamine 1-phosphate (lipid X) and UMP by catalyzing the attack of water at the alpha-P atom. Involved in the biosynthesis of lipid A, a phosphorylated glycolipid that anchors the lipopolysaccharide to the outer membrane of the cell. The chain is UDP-2,3-diacylglucosamine hydrolase from Shewanella baltica (strain OS223).